A 182-amino-acid polypeptide reads, in one-letter code: Probable nicotinate-nucleotide adenylyltransferase (182 aa).

This sequence belongs to the NadD family.

The catalysed reaction is nicotinate beta-D-ribonucleotide + ATP + H(+) = deamido-NAD(+) + diphosphate. It functions in the pathway cofactor biosynthesis; NAD(+) biosynthesis; deamido-NAD(+) from nicotinate D-ribonucleotide: step 1/1. In terms of biological role, catalyzes the reversible adenylation of nicotinate mononucleotide (NaMN) to nicotinic acid adenine dinucleotide (NaAD). This Sulfurimonas denitrificans (strain ATCC 33889 / DSM 1251) (Thiomicrospira denitrificans (strain ATCC 33889 / DSM 1251)) protein is Probable nicotinate-nucleotide adenylyltransferase.